Reading from the N-terminus, the 1077-residue chain is TSC22 domain family protein 1 (1077 aa).

Positions 1-98 are required for interaction with TGFBR1 and promotion of TGF-beta signaling; sequence MHQPPESTAA…SQAQLQGQPL (98 aa). Disordered stretches follow at residues 22–112, 125–283, 458–492, 842–874, and 909–947; these read MAHP…SGFQ, ISSN…VPSS, QTPT…SVGS, SSAA…GSLV, and QAIG…SDGS. Pro residues predominate over residues 58 to 70; sequence FPPPSLLQPPPPA. Low complexity predominate over residues 84–96; sequence SLNLLSQAQLQGQ. Residues 133-142 are compositionally biased toward acidic residues; the sequence is EDTESYDDLD. Over residues 216-240 the composition is skewed to basic residues; sequence HPHHLHHHHHPHHGHHLHHGHHHSS. Residue S263 is modified to Phosphoserine. The segment covering 471 to 489 has biased composition (low complexity); the sequence is TSGSSVSSSVSTLSHYTES. Residues 852–874 show a composition bias toward polar residues; the sequence is VPTNLVPPQNIAQPPATQNGSLV. Positions 933–947 are enriched in low complexity; sequence MSGDSGGMSAVSDGS. The interval 1010 to 1031 is leucine-zipper; sequence LKEQIKELIEKNSQLEQENNLL. The disordered stretch occupies residues 1042–1077; that stretch reads QFQAQLQTGSPPATTQPQGTTQPPAQPASQGSGSTA. Residues 1048–1077 are compositionally biased toward low complexity; sequence QTGSPPATTQPQGTTQPPAQPASQGSGSTA.

It belongs to the TSC-22/Dip/Bun family. In terms of assembly, forms homodimers. Forms heterodimers. Component of a complex composed of TSC22D1 (via N-terminus), TGFBR1 and TGFBR2; the interaction between TSC22D1 and TGFBR1 is inhibited by SMAD7 and promoted by TGFB1. Interacts with SMAD7; the interaction requires TGF-beta and the interaction is inhibited by TGFBR1. Interacts with TPT1/fortilin; interaction results in the destabilization of TSC22D1 protein and prevents TSC22D1-mediated apoptosis. Interacts with SMAD4 (via N-terminus). Interacts with ACVRL1/ALK1, ACVR1/ALK2, BMPR1A/ALK3, ACVR1B/ALK4, BMPR1B/ALK6, ACVR2A/ACTRII, and BMPR2. Interacts with SMAD6. Interacts with TFE3; the interaction is enhanced in the presence of TGF-beta. As to quaternary structure, forms a heterodimer with TSC22D4/THG1. Forms a heterodimer with TSC22D4/THG1. Interacts with histone H1-2. Interacts with GNL3. As to expression, expressed in bone marrow cells (at protein level). Expressed in T-cells. Expressed in the brain. In terms of tissue distribution, expressed in the myoepithelial cells of the mammary gland ducts and alveoli, expression is consistent throughout pregnancy, lactation and involution (at protein level). Expressed in the cortex, medulla and papilla of the kidney. Expressed in the myoepithelial cells of the mammary gland, expression significantly increases in the secretory luminal epithelium of the mammary gland at the initiation of involution, with levels decreasing from day 3 of involution onwards (at protein level). Expressed in the cortex, medulla and papilla of the kidney.

It is found in the cytoplasm. It localises to the nucleus. Its subcellular location is the cell membrane. The protein localises to the mitochondrion. Its function is as follows. Transcriptional repressor. Acts on the C-type natriuretic peptide (CNP) promoter. Acts to promote CASP3-mediated apoptosis. Positively regulates TGF-beta signaling by interacting with SMAD7 which inhibits binding of SMAD7 to TGFBR1, preventing recruitment of SMURF ubiquitin ligases to TGFBR1 and inhibiting SMURF-mediated ubiquitination and degradation of TGFBR1. Contributes to enhancement of TGF-beta signaling by binding to and modulating the transcription activator activity of SMAD4. Promotes TGF-beta-induced transcription of COL1A2; via its interaction with TFE3 at E-boxes in the gene proximal promoter. Plays a role in the repression of hematopoietic precursor cell growth. Promotes IL2 deprivation-induced apoptosis in T-lymphocytes, via repression of TSC22D3/GILZ transcription and activation of the caspase cascade. May act to negatively regulate TGFB3 signaling and thereby inhibit cell death in mammary gland cells. Functionally, positively regulates cell death in response to TGFB3 during mammary gland involution. In Mus musculus (Mouse), this protein is TSC22 domain family protein 1.